A 342-amino-acid polypeptide reads, in one-letter code: MNIGIVNDLPLAVEALRRTIALRPEHRVLWVATDGAQAVDFCVAQPPDLVLMDLVMPRIDGVSATRSIMERSPCAILIVTANVGANASYVYEAMGAGALDAVDTPTLGQGGSADPSQPLLAKIDQIGRLLATRMPAAAPAAAAPAPQGALPPLVAIGASAGGPTALTALLRRLPEDFPAAIVIVQHVDQAFAIGMAQWLDGYSRLPVRIARQGGVPQAGEVLLAATNDHLHLTARGSLAYTRRPEETPYRPSVDVFFHSVVDHWKGEAIGVLLTGMGRDGALGLKAMRTKGHYTIAQDEATSAVYGMPKAAAAIGAASAVLPLERIADQLISLVQRNRQRRR.

One can recognise a Response regulatory domain in the interval 2–119; sequence NIGIVNDLPL…GGSADPSQPL (118 aa). Asp53 bears the 4-aspartylphosphate mark. The region spanning 144-337 is the CheB-type methylesterase domain; sequence PAPQGALPPL…DQLISLVQRN (194 aa). Catalysis depends on residues Ser159, His186, and Asp279.

It belongs to the CheB family. In terms of processing, phosphorylated by CheA. Phosphorylation of the N-terminal regulatory domain activates the methylesterase activity.

The protein localises to the cytoplasm. It catalyses the reaction [protein]-L-glutamate 5-O-methyl ester + H2O = L-glutamyl-[protein] + methanol + H(+). The enzyme catalyses L-glutaminyl-[protein] + H2O = L-glutamyl-[protein] + NH4(+). Functionally, involved in chemotaxis. Part of a chemotaxis signal transduction system that modulates chemotaxis in response to various stimuli. Catalyzes the demethylation of specific methylglutamate residues introduced into the chemoreceptors (methyl-accepting chemotaxis proteins or MCP) by CheR. Also mediates the irreversible deamidation of specific glutamine residues to glutamic acid. This chain is Protein-glutamate methylesterase/protein-glutamine glutaminase 4, found in Burkholderia thailandensis (strain ATCC 700388 / DSM 13276 / CCUG 48851 / CIP 106301 / E264).